We begin with the raw amino-acid sequence, 659 residues long: 1,4-alpha-glucan branching enzyme GlgB (659 aa).

Over residues 1-12 the composition is skewed to basic and acidic residues; the sequence is MRNCKELKHEKN. The disordered stretch occupies residues 1 to 25; the sequence is MRNCKELKHEKNGNVTEKIGKNKGK. Aspartate 337 acts as the Nucleophile in catalysis. Glutamate 390 serves as the catalytic Proton donor.

This sequence belongs to the glycosyl hydrolase 13 family. GlgB subfamily. In terms of assembly, monomer.

It carries out the reaction Transfers a segment of a (1-&gt;4)-alpha-D-glucan chain to a primary hydroxy group in a similar glucan chain.. It participates in glycan biosynthesis; glycogen biosynthesis. Catalyzes the formation of the alpha-1,6-glucosidic linkages in glycogen by scission of a 1,4-alpha-linked oligosaccharide from growing alpha-1,4-glucan chains and the subsequent attachment of the oligosaccharide to the alpha-1,6 position. The sequence is that of 1,4-alpha-glucan branching enzyme GlgB from Clostridium perfringens (strain ATCC 13124 / DSM 756 / JCM 1290 / NCIMB 6125 / NCTC 8237 / Type A).